The following is a 100-amino-acid chain: Small ribosomal subunit protein uS14 (100 aa).

This sequence belongs to the universal ribosomal protein uS14 family. Part of the 30S ribosomal subunit. Contacts proteins S3 and S10.

Its function is as follows. Binds 16S rRNA, required for the assembly of 30S particles and may also be responsible for determining the conformation of the 16S rRNA at the A site. This is Small ribosomal subunit protein uS14 from Synechococcus sp. (strain CC9311).